A 142-amino-acid polypeptide reads, in one-letter code: General odorant-binding protein 99a (142 aa).

The first 16 residues, 1–16 (MKVFVAICVLIGLASA), serve as a signal peptide directing secretion. Intrachain disulfides connect Cys-33–Cys-64, Cys-60–Cys-116, and Cys-105–Cys-125.

Belongs to the PBP/GOBP family. As to expression, expressed in larval chemosensory organ. Specifically expressed exclusively in a subset of chemosensory sensilla on the third antennal segment.

It localises to the secreted. Functionally, present in the aqueous fluid surrounding olfactory sensory dendrites and are thought to aid in the capture and transport of hydrophobic odorants into and through this fluid. This is General odorant-binding protein 99a (Obp99a) from Drosophila melanogaster (Fruit fly).